A 76-amino-acid chain; its full sequence is ATP synthase subunit 9, mitochondrial (76 aa).

Methionine 1 carries the N-formylmethionine modification. 2 helical membrane-spanning segments follow: residues 14–34 and 52–72; these read LASI…AALI and ILGF…AFLL.

F-type ATP synthases have 2 components, the catalytic core F(1) and the membrane-embedded component F(0), linked together by a central stalk and a peripheral stalk. The central stalk, also called rotor shaft, is often seen as part of F(1). The peripheral stalk is seen as part of F(0). F(0) contains the membrane channel next to the rotor. F-type ATP synthases form dimers but each monomer functions independently in ATP generation. The dimer consists of 17 different polypeptides: ATP1 (subunit alpha, 3 molecules per monomer, part of F(1)), ATP2 (subunit beta, 3 copies per monomer, part of F(1)), ATP3 (subunit gamma, part of the central stalk), ATP4 (subunit b, part of the peripheral stalk), ATP5/OSCP (subunit 5/OSCP, part of the peripheral stalk), ATP6 (subunit a, part of the peripheral stalk), ATP7 (subunit d, part of the peripheral stalk), ATP8 (subunit 8, part of the peripheral stalk), OLI1 (subunit c, part of the rotor, 10 molecules per monomer), ATP14 (subunit h, part of the peripheral stalk), ATP15 (subunit epsilon, part of the central stalk), ATP16 (subunit delta, part of the central stalk), ATP17 (subunit f, part of the peripheral stalk), ATP18 (subunit i/j, part of the peripheral stalk), ATP19 (subunit k, dimer-specific, at interface between monomers), ATP20 (subunit g, at interface between monomers), TIM11 (subunit e, at interface between monomers).

The protein resides in the mitochondrion inner membrane. In terms of biological role, mitochondrial membrane ATP synthase (F(1)F(0) ATP synthase or Complex V) produces ATP from ADP in the presence of a proton gradient across the membrane which is generated by electron transport complexes of the respiratory chain. F-type ATP synthases consist of two structural domains, F(1) - containing the extramembraneous catalytic core, and F(0) - containing the membrane proton channel, linked together by a central stalk and a peripheral stalk. During catalysis, ATP synthesis in the catalytic domain of F(1) is coupled via a rotary mechanism of the central stalk subunits to proton translocation. Part of the complex F(0) domain. A homomeric c-ring of 10 OLI1/ATP9 subunits is part of the complex rotary element. The chain is ATP synthase subunit 9, mitochondrial from Yarrowia lipolytica (strain CLIB 122 / E 150) (Yeast).